The sequence spans 509 residues: Phytase A (509 aa).

An N-terminal signal peptide occupies residues 1–15 (MFLLMVPLFSYLAAA). A disulfide bridge connects residues C27 and C36. 7 residues coordinate 1D-myo-inositol hexakisphosphate: Q46, Y47, R75, H76, R79, T82, and R164. 4 disulfides stabilise this stretch: C65–C444, C216–C507, C266–C295, and C478–C486. Catalysis depends on H76, which acts as the Nucleophile. N-linked (GlcNAc...) asparagine glycosylation is found at N171 and N208. K314 serves as a coordination point for 1D-myo-inositol hexakisphosphate. N-linked (GlcNAc...) asparagine glycosylation is found at N348, N352, and N367. H376 and D377 together coordinate 1D-myo-inositol hexakisphosphate. A glycan (N-linked (GlcNAc...) asparagine) is linked at N401.

The protein belongs to the histidine acid phosphatase family. Monomer.

Its subcellular location is the secreted. It catalyses the reaction 1D-myo-inositol hexakisphosphate + H2O = 1D-myo-inositol 1,2,4,5,6-pentakisphosphate + phosphate. The enzyme catalyses 1D-myo-inositol 1,2,4,5,6-pentakisphosphate + H2O = 1D-myo-inositol 1,2,5,6-tetrakisphosphate + phosphate. It carries out the reaction 1D-myo-inositol 1,2,5,6-tetrakisphosphate + H2O = 1D-myo-inositol 1,2,6-trisphosphate + phosphate. The catalysed reaction is 1D-myo-inositol 1,2,6-trisphosphate + H2O = 1D-myo-inositol 1,2-bisphosphate + phosphate. It catalyses the reaction 1D-myo-inositol 1,2-bisphosphate + H2O = 1D-myo-inositol 2-phosphate + phosphate. Its function is as follows. Catalyzes the phosphate monoester hydrolysis of phytic acid (myo-inositol hexakisphosphate), which results in the stepwise formation of myo-inositol pentakis-, tetrakis-, tris-, bis-, and monophosphates, as well as the liberation of inorganic phosphate. Myo-inositol 2-monophosphate is the end product. Is also able to dephosphorylate the classic acid phosphatase substrate p-nitrophenyl phosphate. The protein is Phytase A (pht-1) of Neurospora crassa (strain ATCC 24698 / 74-OR23-1A / CBS 708.71 / DSM 1257 / FGSC 987).